A 477-amino-acid polypeptide reads, in one-letter code: Ribulose bisphosphate carboxylase large chain (477 aa).

The propeptide occupies 1–2 (MS). The residue at position 3 (Pro-3) is an N-acetylproline. An N6,N6,N6-trimethyllysine modification is found at Lys-14. 2 residues coordinate substrate: Asn-123 and Thr-173. Lys-175 functions as the Proton acceptor in the catalytic mechanism. Lys-177 provides a ligand contact to substrate. Positions 201, 203, and 204 each coordinate Mg(2+). At Lys-201 the chain carries N6-carboxylysine. His-294 (proton acceptor) is an active-site residue. Arg-295, His-327, and Ser-379 together coordinate substrate.

Belongs to the RuBisCO large chain family. Type I subfamily. In terms of assembly, heterohexadecamer of 8 large chains and 8 small chains; disulfide-linked. The disulfide link is formed within the large subunit homodimers. It depends on Mg(2+) as a cofactor. The disulfide bond which can form in the large chain dimeric partners within the hexadecamer appears to be associated with oxidative stress and protein turnover.

It is found in the plastid. The protein resides in the chloroplast. It carries out the reaction 2 (2R)-3-phosphoglycerate + 2 H(+) = D-ribulose 1,5-bisphosphate + CO2 + H2O. The enzyme catalyses D-ribulose 1,5-bisphosphate + O2 = 2-phosphoglycolate + (2R)-3-phosphoglycerate + 2 H(+). Its function is as follows. RuBisCO catalyzes two reactions: the carboxylation of D-ribulose 1,5-bisphosphate, the primary event in carbon dioxide fixation, as well as the oxidative fragmentation of the pentose substrate in the photorespiration process. Both reactions occur simultaneously and in competition at the same active site. The polypeptide is Ribulose bisphosphate carboxylase large chain (Nicotiana acuminata (Acuminate tobacco)).